The sequence spans 430 residues: Adenylosuccinate synthetase (430 aa).

Residues 12 to 18 and 40 to 42 each bind GTP; these read GDEGKGK and GHT. The active-site Proton acceptor is Asp13. Positions 13 and 40 each coordinate Mg(2+). Residues 13 to 16, 38 to 41, Thr129, Arg143, Gln224, Thr239, and Arg303 each bind IMP; these read DEGK and NAGH. The active-site Proton donor is His41. 299–305 serves as a coordination point for substrate; it reads TVSNRER. GTP contacts are provided by residues Arg305, 331–333, and 413–415; these read KLD and STG.

It belongs to the adenylosuccinate synthetase family. As to quaternary structure, homodimer. Mg(2+) serves as cofactor.

Its subcellular location is the cytoplasm. It catalyses the reaction IMP + L-aspartate + GTP = N(6)-(1,2-dicarboxyethyl)-AMP + GDP + phosphate + 2 H(+). It functions in the pathway purine metabolism; AMP biosynthesis via de novo pathway; AMP from IMP: step 1/2. In terms of biological role, plays an important role in the de novo pathway of purine nucleotide biosynthesis. Catalyzes the first committed step in the biosynthesis of AMP from IMP. The chain is Adenylosuccinate synthetase from Ehrlichia ruminantium (strain Welgevonden).